We begin with the raw amino-acid sequence, 110 residues long: Suppressor of silencing 2b (110 aa).

Positions 16–45 (ARMVEAKKQRRRSHKQNRRERGHKSPSERA) are disordered. The Nuclear localization signal signature appears at 22–27 (KKQRRR). Positions 23–37 (KQRRRSHKQNRRERG) are enriched in basic residues.

This sequence belongs to the cucumovirus/ilarvirus protein 2b family. In terms of assembly, homotetramer. Interacts with host AGO1; this interaction blocks AGO1 cleavage activity to attenuate RNA silencing and thus counter host defense. Interacts with host JAZ.

The protein localises to the host nucleus. In terms of biological role, multifunctional protein that plays two independent roles: viral suppressor of host RNAi (VSR) and viral inducer of host attractiveness to insect vectors (VIA). Acts as a suppressor of RNA-mediated gene silencing, also known as post-transcriptional gene silencing (PTGS), a mechanism of plant viral defense that limits the accumulation of viral RNAs. May directly interfere with mobile silencing signaling. Also inhibits signal transduction by the phytohormone jasmonate, making the infected plant more attractive to aphids, which are the second host to play a role as a dissemination vector. Acts by binding to and inhibiting JAZ degradation in the host. The chain is Suppressor of silencing 2b from Cucurbita pepo (Vegetable marrow).